The sequence spans 135 residues: Large ribosomal subunit protein eL32 (135 aa).

A disordered region spans residues 51-77; sequence GRDNKFRLKMKGKPRPPEPGYRSPRKV.

It belongs to the eukaryotic ribosomal protein eL32 family.

This Nanoarchaeum equitans (strain Kin4-M) protein is Large ribosomal subunit protein eL32 (rpl32e).